Consider the following 658-residue polypeptide: Transcription factor E2-alpha (658 aa).

Disordered regions lie at residues 42–82 (STQF…GTHY), 140–191 (SALS…YPAN), 276–313 (NPSV…GTAT), 331–372 (DHSS…SYDG), 460–558 (VPAQ…ERRV), and 628–658 (EEEK…VGHM). Residues 173 to 179 (PKKVRKV) carry the Nuclear localization signal motif. Residues 276–303 (NPSVTSSFSSTPAQYGVSSHTPPISTGD) are compositionally biased toward polar residues. Positions 333-344 (SSTNFSSTPSTP) are enriched in low complexity. The span at 345-355 (VGSPQGITGSG) shows a compositional bias: polar residues. Over residues 493-507 (PDIKRESKEDEENRS) the composition is skewed to basic and acidic residues. The segment covering 533–544 (QDEDEDEDDDNL) has biased composition (acidic residues). Positions 548-558 (QKAEREKERRV) are enriched in basic and acidic residues. The bHLH domain occupies 555 to 608 (ERRVANNARERLRVKDINEAFKELGRMCQLHLNSEKPQTKLLILHQAVSVILSL).

Homodimer. Heterodimer; efficient DNA binding requires dimerization with another bHLH protein. Interacts with tgfb1i1.

Its subcellular location is the nucleus. In terms of biological role, transcriptional regulator involved in the initiation of neuronal differentiation and mesenchymal to epithelial transition. Heterodimers between tcf3 and tissue-specific basic helix-loop-helix (bHLH) proteins play major roles in determining tissue-specific cell fate during embryogenesis, like muscle or early B-cell differentiation. Together with tcf15, required for the mesenchymal to epithelial transition. Dimers bind DNA on E-box motifs: 5'-CANNTG-3'. This Xenopus laevis (African clawed frog) protein is Transcription factor E2-alpha (tcf3).